The primary structure comprises 88 residues: UPF0495 protein DEHA2C16280g (88 aa).

Residues 25–47 form a helical membrane-spanning segment; it reads YPLFAAMGVAVASGCFFTYRHFA.

Belongs to the UPF0495 family.

The protein localises to the membrane. In Debaryomyces hansenii (strain ATCC 36239 / CBS 767 / BCRC 21394 / JCM 1990 / NBRC 0083 / IGC 2968) (Yeast), this protein is UPF0495 protein DEHA2C16280g.